The chain runs to 110 residues: Nucleoid-associated protein Mkms_4993 (110 aa).

It belongs to the YbaB/EbfC family. As to quaternary structure, homodimer.

It localises to the cytoplasm. It is found in the nucleoid. Functionally, binds to DNA and alters its conformation. May be involved in regulation of gene expression, nucleoid organization and DNA protection. This Mycobacterium sp. (strain KMS) protein is Nucleoid-associated protein Mkms_4993.